A 266-amino-acid polypeptide reads, in one-letter code: UPF0246 protein Pcryo_0542 (266 aa).

The protein belongs to the UPF0246 family.

This Psychrobacter cryohalolentis (strain ATCC BAA-1226 / DSM 17306 / VKM B-2378 / K5) protein is UPF0246 protein Pcryo_0542.